The chain runs to 865 residues: cGMP-specific 3',5'-cyclic phosphodiesterase (865 aa).

Phosphoserine is present on Ser-92. GAF domains lie at 154–304 (DVTA…GIVL) and 336–493 (SLEV…GLGI). Residues 526–850 (ETRELQALSA…QKWQALAEQQ (325 aa)) form the PDEase domain. The active-site Proton donor is the His-603. Zn(2+) contacts are provided by His-607, His-643, Asp-644, and Asp-754. Asp-644 contacts Mg(2+). Residue Gln-807 coordinates 3',5'-cyclic GMP.

Belongs to the cyclic nucleotide phosphodiesterase family. Zn(2+) serves as cofactor. Requires Mg(2+) as cofactor. Phosphorylation is regulated by binding of cGMP to the two allosteric sites. Phosphorylation by PRKG1 leads to its activation.

It carries out the reaction 3',5'-cyclic GMP + H2O = GMP + H(+). It participates in purine metabolism; 3',5'-cyclic GMP degradation; GMP from 3',5'-cyclic GMP: step 1/1. In terms of biological role, plays a role in signal transduction by regulating the intracellular concentration of cyclic nucleotides. This phosphodiesterase catalyzes the specific hydrolysis of cGMP to 5'-GMP. Specifically regulates nitric-oxide-generated cGMP. The chain is cGMP-specific 3',5'-cyclic phosphodiesterase (Pde5a) from Mus musculus (Mouse).